The following is a 228-amino-acid chain: RNA pyrophosphohydrolase (228 aa).

Positions 1–70 (MEKRSGIGRL…KQWVKMMNDI (70 aa)) are unknown. A rppH domain region spans residues 71-228 (VIDKRGFRLG…VLTEFAEFIR (158 aa)). In terms of domain architecture, Nudix hydrolase spans 76-221 (GFRLGVGMVI…KRDVYQKVLT (146 aa)). The Nudix box signature appears at 109 to 130 (GGLLPNETLREALNRELDEEVG).

In the C-terminal section; belongs to the Nudix hydrolase family. RppH subfamily. Requires a divalent metal cation as cofactor.

Accelerates the degradation of transcripts by removing pyrophosphate from the 5'-end of triphosphorylated RNA, leading to a more labile monophosphorylated state that can stimulate subsequent ribonuclease cleavage. This Coxiella burnetii (strain RSA 493 / Nine Mile phase I) protein is RNA pyrophosphohydrolase.